Consider the following 546-residue polypeptide: Chaperonin GroEL (546 aa).

ATP-binding positions include 29 to 32 (TLGP), K50, 86 to 90 (DGTTT), G415, and D495.

It belongs to the chaperonin (HSP60) family. In terms of assembly, forms a cylinder of 14 subunits composed of two heptameric rings stacked back-to-back. Interacts with the co-chaperonin GroES.

The protein resides in the cytoplasm. The catalysed reaction is ATP + H2O + a folded polypeptide = ADP + phosphate + an unfolded polypeptide.. In terms of biological role, together with its co-chaperonin GroES, plays an essential role in assisting protein folding. The GroEL-GroES system forms a nano-cage that allows encapsulation of the non-native substrate proteins and provides a physical environment optimized to promote and accelerate protein folding. The polypeptide is Chaperonin GroEL (Parabacteroides distasonis (strain ATCC 8503 / DSM 20701 / CIP 104284 / JCM 5825 / NCTC 11152)).